Consider the following 359-residue polypeptide: Endosome-associated-trafficking regulator 1 (359 aa).

Residues S18 and S74 each carry the phosphoserine modification. Residues L100–S125 are required for interaction with PTPN13. The disordered stretch occupies residues S153–G180. Polar residues predominate over residues L159–A174. Phosphoserine occurs at positions 167 and 171. The stretch at D185–S295 forms a coiled coil.

Belongs to the ENTR1 family. Found in a complex with ENTR1, PTPN13 and GIT1. Interacts with PTPN13 (via the FERM domain). Interacts (via N-terminus) with GIT1 (via N- and C-terminus); this interaction is direct. Interacts with NOD2. Interacts (via N-terminus) with IFT88. Interacts with VPS35. Post-translationally, phosphorylated.

The protein resides in the cytoplasm. Its subcellular location is the early endosome. It is found in the endosome. The protein localises to the recycling endosome. It localises to the midbody. The protein resides in the cytoskeleton. Its subcellular location is the microtubule organizing center. It is found in the centrosome. The protein localises to the cilium basal body. Its function is as follows. Endosome-associated protein that plays a role in membrane receptor sorting, cytokinesis and ciliogenesis. Involved in the endosome-to-plasma membrane trafficking and recycling of SNX27-retromer-dependent cargo proteins, such as GLUT1. Involved in the regulation of cytokinesis; the function may involve PTPN13 and GIT1. Plays a role in the formation of cilia. Involved in cargo protein localization, such as PKD2, at primary cilia. Involved in the presentation of the tumor necrosis factor (TNF) receptor TNFRSF1A on the cell surface, and hence in the modulation of the TNF-induced apoptosis. The sequence is that of Endosome-associated-trafficking regulator 1 from Bos taurus (Bovine).